The sequence spans 197 residues: U1 small nuclear ribonucleoprotein C (197 aa).

The Matrin-type zinc-finger motif lies at 4-36; that stretch reads YYCEYCDIYLTHSSPVGRRQHNQGRKHISAKIE. The span at 128–137 shows a compositional bias: low complexity; sequence FHNNKRINNI. The segment at 128–178 is disordered; the sequence is FHNNKRINNIPKPYNNYTNKPITNSSYKNDKQDYRNNNESNDNMNSNNFSN. A compositionally biased stretch (polar residues) spans 142–154; that stretch reads NNYTNKPITNSSY. Positions 164–178 are enriched in low complexity; it reads NNESNDNMNSNNFSN.

Belongs to the U1 small nuclear ribonucleoprotein C family. U1 snRNP is composed of the 7 core Sm proteins B/B', D1, D2, D3, E, F and G that assemble in a heptameric protein ring on the Sm site of the small nuclear RNA to form the core snRNP, and at least 3 U1 snRNP-specific proteins U1-70K, U1-A and U1-C. U1-C interacts with U1 snRNA and the 5' splice-site region of the pre-mRNA.

Its subcellular location is the nucleus. Component of the spliceosomal U1 snRNP, which is essential for recognition of the pre-mRNA 5' splice-site and the subsequent assembly of the spliceosome. U1-C is directly involved in initial 5' splice-site recognition for both constitutive and regulated alternative splicing. The interaction with the 5' splice-site seems to precede base-pairing between the pre-mRNA and the U1 snRNA. Stimulates commitment or early (E) complex formation by stabilizing the base pairing of the 5' end of the U1 snRNA and the 5' splice-site region. The chain is U1 small nuclear ribonucleoprotein C (SNRPC) from Plasmodium berghei (strain Anka).